The primary structure comprises 143 residues: Antiholin-like protein LrgA (143 aa).

4 helical membrane passes run 6–26 (VYSF…SNII), 30–50 (LPIP…LLCL), 61–81 (LGTA…ISVI), and 97–117 (VIVV…QFIL).

Belongs to the CidA/LrgA family. LrgA subfamily.

It is found in the cell membrane. In terms of biological role, inhibits the expression or activity of extracellular murein hydrolases by interacting, possibly with LrgB, with the holin-like protein CidA. The LrgAB and CidA proteins may affect the proton motive force of the membrane. May be involved in programmed cell death (PCD), possibly triggering PCD in response to antibiotics and environmental stresses. The chain is Antiholin-like protein LrgA from Bacillus cereus (strain AH820).